Reading from the N-terminus, the 57-residue chain is MLGWALTFFILAIIAALLGFGGIAGAAASIAKILFFVFLALLVITFVARALRGRSIT.

Transmembrane regions (helical) follow at residues 4–24 and 27–47; these read WALT…GGIA and AASI…ITFV.

It belongs to the UPF0391 family.

It is found in the cell membrane. The polypeptide is UPF0391 membrane protein HNE_2348 (Hyphomonas neptunium (strain ATCC 15444)).